An 86-amino-acid polypeptide reads, in one-letter code: Alpha-mammal toxin Ts3 (86 aa).

An N-terminal signal peptide occupies residues 1-19; the sequence is MNYFILLVVVCLLTAGTEG. The LCN-type CS-alpha/beta domain occupies 21-82; it reads KDGYPVEYDN…EPTKTNGKCK (62 aa). Intrachain disulfides connect Cys-31-Cys-81, Cys-35-Cys-57, Cys-43-Cys-64, and Cys-47-Cys-66. Ser-83 is subject to Serine amide.

As to expression, expressed by the venom gland.

The protein localises to the secreted. Alpha toxins bind voltage-independently at site-3 of sodium channels (Nav) and inhibit the inactivation of the activated channels, thereby blocking neuronal transmission. This synthetic toxin inhibits inactivation of rat Nav1.4/SCN4A (when tested at 201 nM). In addition, it has been shown to cause a persistent sodium channel activation in nitrergic inhibitory fibers innervating the rabbit corpus cavernosum, resulting in NO release and cavernosal smooth muscle relaxation. This toxin is active against mammals. Functionally, this synthetic peptide with a Ser at position 31 (C12S) acts as a bradykinin-potentiating peptide (BPP). Induces endothelium-dependent vasodilation that is reverted by NO synthase inhibitor, suggesting it activates molecular targets on vascular endothelium leading to NO production and vasodilation. It appears to induce vasodilation through muscarinic acetylcholine receptors (AChR) M2 (CHRM2) and M3 (CHRM3). Does not inhibit the angiotensin-converting enzyme (ACE). Does not act via bradykinin B2 receptor. This is Alpha-mammal toxin Ts3 from Tityus serrulatus (Brazilian scorpion).